Consider the following 423-residue polypeptide: Glutaminase (423 aa).

Residues 27 to 312 (GEVAQYIPQL…LSEDMGLHLM (286 aa)) are glutaminase. Substrate contacts are provided by Ser69, Asn119, Glu165, Asn172, Tyr196, Tyr248, and Val266. An STAS domain is found at 321–423 (AVRAIEERGD…SPQVDDPEEL (103 aa)).

It belongs to the glutaminase family. As to quaternary structure, homotetramer.

The enzyme catalyses L-glutamine + H2O = L-glutamate + NH4(+). This is Glutaminase (glsA) from Corynebacterium efficiens (strain DSM 44549 / YS-314 / AJ 12310 / JCM 11189 / NBRC 100395).